The primary structure comprises 243 residues: 7-cyano-7-deazaguanine synthase (243 aa).

9–19 (FSGGQDSTTCL) contributes to the ATP binding site. Residues cysteine 205, cysteine 220, cysteine 223, and cysteine 226 each contribute to the Zn(2+) site.

It belongs to the QueC family. The cofactor is Zn(2+).

It catalyses the reaction 7-carboxy-7-deazaguanine + NH4(+) + ATP = 7-cyano-7-deazaguanine + ADP + phosphate + H2O + H(+). Its pathway is purine metabolism; 7-cyano-7-deazaguanine biosynthesis. Its function is as follows. Catalyzes the ATP-dependent conversion of 7-carboxy-7-deazaguanine (CDG) to 7-cyano-7-deazaguanine (preQ(0)). This is 7-cyano-7-deazaguanine synthase from Albidiferax ferrireducens (strain ATCC BAA-621 / DSM 15236 / T118) (Rhodoferax ferrireducens).